Here is a 121-residue protein sequence, read N- to C-terminus: uncharacterized protein (121 aa).

The signal sequence occupies residues 1–23 (MNFSTVFQAIIAVLGLTTVTALA). Residues asparagine 68 and asparagine 84 are each glycosylated (N-linked (GlcNAc...) asparagine).

Post-translationally, N-glycosylated.

This is an uncharacterized protein from Saccharomyces cerevisiae (strain ATCC 204508 / S288c) (Baker's yeast).